A 245-amino-acid polypeptide reads, in one-letter code: Aliphatic sulfonates import ATP-binding protein SsuB (245 aa).

The region spanning 6-225 (VTVRGLRRAF…SRGDEGFDDL (220 aa)) is the ABC transporter domain. 38–45 (GLSGSGKS) is an ATP binding site.

Belongs to the ABC transporter superfamily. Aliphatic sulfonates importer (TC 3.A.1.17.2) family. As to quaternary structure, the complex is composed of two ATP-binding proteins (SsuB), two transmembrane proteins (SsuC) and a solute-binding protein (SsuA).

The protein resides in the cell membrane. The enzyme catalyses ATP + H2O + aliphatic sulfonate-[sulfonate-binding protein]Side 1 = ADP + phosphate + aliphatic sulfonateSide 2 + [sulfonate-binding protein]Side 1.. In terms of biological role, part of the ABC transporter complex SsuABC involved in aliphatic sulfonates import. Responsible for energy coupling to the transport system. The sequence is that of Aliphatic sulfonates import ATP-binding protein SsuB from Mycobacterium sp. (strain MCS).